The following is a 115-amino-acid chain: T cell receptor beta variable 7-2 (115 aa).

The signal sequence occupies residues 1 to 21; sequence MGTRLLFWVAFCLLGADHTGA. Positions 22-115 constitute an Ig-like domain; it reads GVSQSPSNKV…SAVYLCASSL (94 aa). An intrachain disulfide couples Cys-42 to Cys-111.

Alpha-beta TR is a heterodimer composed of an alpha and beta chain; disulfide-linked. The alpha-beta TR is associated with the transmembrane signaling CD3 coreceptor proteins to form the TR-CD3 (TcR or TCR). The assembly of alpha-beta TR heterodimers with CD3 occurs in the endoplasmic reticulum where a single alpha-beta TR heterodimer associates with one CD3D-CD3E heterodimer, one CD3G-CD3E heterodimer and one CD247 homodimer forming a stable octameric structure. CD3D-CD3E and CD3G-CD3E heterodimers preferentially associate with TR alpha and TR beta chains, respectively. The association of the CD247 homodimer is the last step of TcR assembly in the endoplasmic reticulum and is required for transport to the cell surface.

The protein localises to the cell membrane. V region of the variable domain of T cell receptor (TR) beta chain that participates in the antigen recognition. Alpha-beta T cell receptors are antigen specific receptors which are essential to the immune response and are present on the cell surface of T lymphocytes. Recognize peptide-major histocompatibility (MH) (pMH) complexes that are displayed by antigen presenting cells (APC), a prerequisite for efficient T cell adaptive immunity against pathogens. Binding of alpha-beta TR to pMH complex initiates TR-CD3 clustering on the cell surface and intracellular activation of LCK that phosphorylates the ITAM motifs of CD3G, CD3D, CD3E and CD247 enabling the recruitment of ZAP70. In turn ZAP70 phosphorylates LAT, which recruits numerous signaling molecules to form the LAT signalosome. The LAT signalosome propagates signal branching to three major signaling pathways, the calcium, the mitogen-activated protein kinase (MAPK) kinase and the nuclear factor NF-kappa-B (NF-kB) pathways, leading to the mobilization of transcription factors that are critical for gene expression and essential for T cell growth and differentiation. The T cell repertoire is generated in the thymus, by V-(D)-J rearrangement. This repertoire is then shaped by intrathymic selection events to generate a peripheral T cell pool of self-MH restricted, non-autoaggressive T cells. Post-thymic interaction of alpha-beta TR with the pMH complexes shapes TR structural and functional avidity. This Homo sapiens (Human) protein is T cell receptor beta variable 7-2.